We begin with the raw amino-acid sequence, 359 residues long: 4-galactosyl-N-acetylglucosaminide 3-alpha-L-fucosyltransferase 9 (359 aa).

Residues 1-11 (MTSASKGILRP) lie on the Cytoplasmic side of the membrane. Residues 12 to 32 (FLIVCIILGCFMACLLIYIKP) form a helical; Signal-anchor for type II membrane protein membrane-spanning segment. Over 33–359 (TNSWIFSPME…VGNLEKWFWN (327 aa)) the chain is Lumenal. A glycan (N-linked (GlcNAc...) asparagine) is linked at Asn62. Positions 63–168 (ETTILIWVWP…RRDSDIQVPY (106 aa)) are acceptor-binding. Gln75 contributes to the a beta-D-galactosyl-(1-&gt;4)-N-acetyl-beta-D-glucosaminyl derivative binding site. Cystine bridges form between Cys82/Cys335, Cys91/Cys338, and Cys190/Cys238. Asn101 carries an N-linked (GlcNAc...) asparagine glycan. Residue Glu137 coordinates a beta-D-galactosyl-(1-&gt;4)-N-acetyl-beta-D-glucosaminyl derivative. Glu137 (nucleophile) is an active-site residue. Glu137 lines the GDP-beta-L-fucose pocket. A glycan (N-linked (GlcNAc...) asparagine) is linked at Asn153. 11 residues coordinate GDP-beta-L-fucose: Tyr168, Val192, Ser194, Asn195, Arg202, Val226, Tyr241, Asn246, Tyr252, Glu255, and Lys256. The donor-binding stretch occupies residues 169-326 (GFLTVSTNPF…NWRKDFTVNL (158 aa)). The acceptor-binding stretch occupies residues 327–359 (PRFWESHACLACDHVKRHQEYKSVGNLEKWFWN).

Belongs to the glycosyltransferase 10 family. In terms of assembly, homodimer. In terms of processing, N-glycosylated with complex-type N-glycans.

Its subcellular location is the golgi apparatus. It localises to the trans-Golgi network membrane. The protein localises to the golgi apparatus membrane. It carries out the reaction a beta-D-galactosyl-(1-&gt;4)-N-acetyl-beta-D-glucosaminyl derivative + GDP-beta-L-fucose = a beta-D-galactosyl-(1-&gt;4)-[alpha-L-fucosyl-(1-&gt;3)]-N-acetyl-beta-D-glucosaminyl derivative + GDP + H(+). The enzyme catalyses an alpha-Neu5Ac-(2-&gt;3)-beta-D-Gal-(1-&gt;4)-beta-D-GlcNAc-(1-&gt;3)-beta-D-Gal-(1-&gt;4)-beta-D-GlcNAc derivative + GDP-beta-L-fucose = an alpha-Neu5Ac-(2-&gt;3)-beta-D-Gal-(1-&gt;4)-beta-D-GlcNAc-(1-&gt;3)-beta-D-Gal-(1-&gt;4)-[alpha-L-Fuc-(1-&gt;3)]-beta-D-GlcNAc derivative + GDP + H(+). The catalysed reaction is alpha-N-glycoloylneuraminosyl-(2-&gt;3)-beta-D-galactosyl-(1-&gt;4)-N-acetyl-beta-D-glucosaminyl-(1-&gt;3)-beta-D-galactosyl-(1-&gt;4)-N-acetyl-beta-D-glucosaminyl-(1-&gt;3)-beta-D-galactosyl-(1-&gt;4)-beta-D-glucosyl-(1&lt;-&gt;1')-ceramide + GDP-beta-L-fucose = alpha-N-glycoloylneuraminosyl-(2-&gt;3)-beta-D-galactosyl-(1-&gt;4)-N-acetyl-beta-D-glucosaminyl-(1-&gt;3)-beta-D-galactosyl-(1-&gt;4)-[alpha-L-fucosyl-(1-&gt;3)]-N-acetyl-beta-D-glucosaminyl-(1-&gt;3)-beta-D-galactosyl-(1-&gt;4)-beta-D-glucosyl-(1&lt;-&gt;1')-ceramide + GDP + H(+). It catalyses the reaction alpha-D-galactosyl-(1-&gt;3)-beta-D-galactosyl-(1-&gt;4)-N-acetyl-beta-D-glucosaminyl-(1-&gt;3)-beta-D-galactosyl-(1-&gt;4)-beta-D-glucosyl-(1&lt;-&gt;1')-ceramide + GDP-beta-L-fucose = a neolactoside IV(3)-alpha-Gal,III(3)-alpha-Fuc-nLc4Cer + GDP + H(+). It carries out the reaction a neolactoside nLc4Cer + GDP-beta-L-fucose = a neolactoside III(3)-alpha-Fuc-nLc4Cer + GDP + H(+). The enzyme catalyses an N-acetyl-alpha-neuraminyl-(2-&gt;3)-beta-D-galactosyl-(1-&gt;4)-N-acetyl-beta-D-glucosaminyl derivative + GDP-beta-L-fucose = an alpha-Neu5Ac-(2-&gt;3)-beta-D-Gal-(1-&gt;4)-[alpha-L-Fuc-(1-&gt;3)]-beta-D-GlcNAc derivative + GDP + H(+). The catalysed reaction is beta-D-Gal-(1-&gt;4)-beta-D-GlcNAc-(1-&gt;3)-beta-D-Gal-(1-&gt;4)-D-Glc + GDP-beta-L-fucose = beta-D-Gal-(1-&gt;4)-[alpha-L-Fuc-(1-&gt;3)]-beta-D-GlcNAc-(1-&gt;3)-beta-D-Gal-(1-&gt;4)-D-Glc + GDP + H(+). It catalyses the reaction an alpha-L-Fuc-(1-&gt;2)-beta-D-Gal-(1-&gt;4)-beta-D-GlcNAc derivative + GDP-beta-L-fucose = an alpha-L-Fuc-(1-&gt;2)-beta-D-Gal-(1-&gt;4)-[alpha-L-Fuc-(1-&gt;3)]-beta-D-GlcNAc derivative + GDP + H(+). It participates in protein modification; protein glycosylation. Its pathway is glycolipid biosynthesis. Activated by Mn2+. In terms of biological role, catalyzes alpha(1-&gt;3) linkage of fucosyl moiety transferred from GDP-beta-L-fucose to N-acetyl glucosamine (GlcNAc) within type 2 lactosamine (LacNAc, beta-D-Gal-(1-&gt;4)-beta-D-GlcNAc-) glycan attached to glycolipids and N- or O-linked glycoproteins. Fucosylates distal type 2 LacNAc and its fucosylated (H-type 2 LacNAc) and sialylated (sialyl-type 2 LacNAc) derivatives to form Lewis x (Lex) (CD15) and Lewis y (Ley) antigenic epitopes involved in cell adhesion and differentiation. Generates Lex epitopes in the brain, presumably playing a role in the maintenance of neuronal stemness and neurite outgrowth in progenitor neural cells. Fucosylates the internal type 2 LacNAc unit of the polylactosamine chain to form VIM-2 antigen that serves as recognition epitope for SELE. Can also modify milk oligosaccharides in particular type 2 tetrasaccharide LNnT. This Canis lupus familiaris (Dog) protein is 4-galactosyl-N-acetylglucosaminide 3-alpha-L-fucosyltransferase 9.